Reading from the N-terminus, the 166-residue chain is MAKTLSKPASGALAPWLGISLIVILFDQLSKIAILKTFAYGAQHALTSFFSLVLVYNRGAAFGFLSTASGWQRWAFTALGIGATLVICFLLRRHGQQRLFSLSLALILGGALGNVIDRLVYGHVIDFLDFHVGGWHFPAFNLADSAITIGAVLLVYDELRRVRGSR.

4 helical membrane-spanning segments follow: residues 9–29 (ASGA…FDQL), 45–65 (ALTS…FGFL), 71–91 (WQRW…CFLL), and 100–120 (FSLS…DRLV). Active-site residues include aspartate 126 and aspartate 144. Residues 135–155 (WHFPAFNLADSAITIGAVLLV) form a helical membrane-spanning segment.

Belongs to the peptidase A8 family.

The protein localises to the cell inner membrane. The enzyme catalyses Release of signal peptides from bacterial membrane prolipoproteins. Hydrolyzes -Xaa-Yaa-Zaa-|-(S,diacylglyceryl)Cys-, in which Xaa is hydrophobic (preferably Leu), and Yaa (Ala or Ser) and Zaa (Gly or Ala) have small, neutral side chains.. It functions in the pathway protein modification; lipoprotein biosynthesis (signal peptide cleavage). This protein specifically catalyzes the removal of signal peptides from prolipoproteins. This chain is Lipoprotein signal peptidase, found in Burkholderia ambifaria (strain ATCC BAA-244 / DSM 16087 / CCUG 44356 / LMG 19182 / AMMD) (Burkholderia cepacia (strain AMMD)).